The following is a 411-amino-acid chain: Argininosuccinate synthase (411 aa).

Residues 10-18 (AYSGGLDTS) and Ala37 each bind ATP. 2 residues coordinate L-citrulline: Tyr89 and Ser94. Gly119 is a binding site for ATP. Positions 121, 125, and 126 each coordinate L-aspartate. Asn125 provides a ligand contact to L-citrulline. Residues Arg129, Ser178, Ser187, Glu263, and Tyr275 each coordinate L-citrulline.

The protein belongs to the argininosuccinate synthase family. Type 1 subfamily. As to quaternary structure, homotetramer.

The protein resides in the cytoplasm. It carries out the reaction L-citrulline + L-aspartate + ATP = 2-(N(omega)-L-arginino)succinate + AMP + diphosphate + H(+). The protein operates within amino-acid biosynthesis; L-arginine biosynthesis; L-arginine from L-ornithine and carbamoyl phosphate: step 2/3. The polypeptide is Argininosuccinate synthase (Aeromonas hydrophila subsp. hydrophila (strain ATCC 7966 / DSM 30187 / BCRC 13018 / CCUG 14551 / JCM 1027 / KCTC 2358 / NCIMB 9240 / NCTC 8049)).